Reading from the N-terminus, the 212-residue chain is Transcriptional repressor CcpN (212 aa).

An HTH deoR-type domain is found at 6–70; it reads LNKRQEHILQ…FYTGKTGTQL (65 aa). The H-T-H motif DNA-binding region spans 23-42; it reads ITGEHIAEKLNLTRATLRPD. CBS domains follow at residues 83-139 and 148-211; these read FQSI…QQEL and MTRM…ENEI.

Its function is as follows. Transcription repressor that binds to the promoter of gapB and pckA genes, preventing their expression. Acts as a regulator for catabolite repression of gluconeogenic genes. This chain is Transcriptional repressor CcpN (ccpN), found in Bacillus subtilis (strain 168).